A 563-amino-acid chain; its full sequence is Coiled-coil domain-containing protein 63 (563 aa).

A disordered region spans residues 1–29; the sequence is MSVLKKNRRKDSDTPQEPSEKAKEQQAEA. Positions 10–29 are enriched in basic and acidic residues; it reads KDSDTPQEPSEKAKEQQAEA. 3 coiled-coil regions span residues 18 to 201, 233 to 291, and 341 to 422; these read PSEK…QLQH, AMKD…AKKH, and TELN…KKIN.

Plays a role in spermiogenesis. Involved in the elongation of flagella and the formation of sperm heads. This is Coiled-coil domain-containing protein 63 from Homo sapiens (Human).